The sequence spans 469 residues: Exodeoxyribonuclease 7 large subunit (469 aa).

This sequence belongs to the XseA family. In terms of assembly, heterooligomer composed of large and small subunits.

Its subcellular location is the cytoplasm. It catalyses the reaction Exonucleolytic cleavage in either 5'- to 3'- or 3'- to 5'-direction to yield nucleoside 5'-phosphates.. Bidirectionally degrades single-stranded DNA into large acid-insoluble oligonucleotides, which are then degraded further into small acid-soluble oligonucleotides. This is Exodeoxyribonuclease 7 large subunit from Mycoplasma mycoides subsp. mycoides SC (strain CCUG 32753 / NCTC 10114 / PG1).